We begin with the raw amino-acid sequence, 439 residues long: C4-dicarboxylate transport protein (439 aa).

9 helical membrane-spanning segments follow: residues 9 to 29 (HLYF…YYLP), 45 to 65 (MIKM…IAGM), 80 to 100 (LYFE…INII), 150 to 170 (GEIL…SAMG), 186 to 206 (AFFG…FGAM), 221 to 241 (LGML…VVLG), 291 to 311 (VVGL…SIYL), 334 to 354 (ILGV…SGFV), and 357 to 377 (AATF…ILGI).

It belongs to the dicarboxylate/amino acid:cation symporter (DAACS) (TC 2.A.23) family.

It localises to the cell inner membrane. Functionally, responsible for the transport of dicarboxylates such as succinate, fumarate, and malate from the periplasm across the membrane. The chain is C4-dicarboxylate transport protein from Geobacter sp. (strain M21).